Reading from the N-terminus, the 470-residue chain is Glutamate--tRNA ligase 1 (470 aa).

A 'HIGH' region motif is present at residues 15-25; it reads PSPTGTMHIGT. The 'KMSKS' region signature appears at 241–245; that stretch reads KLSKR. Lys-244 provides a ligand contact to ATP.

This sequence belongs to the class-I aminoacyl-tRNA synthetase family. Glutamate--tRNA ligase type 1 subfamily. Monomer.

The protein localises to the cytoplasm. The enzyme catalyses tRNA(Glu) + L-glutamate + ATP = L-glutamyl-tRNA(Glu) + AMP + diphosphate. Catalyzes the attachment of glutamate to tRNA(Glu) in a two-step reaction: glutamate is first activated by ATP to form Glu-AMP and then transferred to the acceptor end of tRNA(Glu). This Jannaschia sp. (strain CCS1) protein is Glutamate--tRNA ligase 1.